The following is a 103-amino-acid chain: MAHDHNHDHEHEERELITLVDEQGNETLFEILLTIDGMEEFGKNYVLLVPANAEEDENGEVEIQAYSFTENEDGTEGDLQPIPEDAEEEWNMIEEVFNSFMEE.

This sequence belongs to the UPF0473 family.

In Streptococcus gordonii (strain Challis / ATCC 35105 / BCRC 15272 / CH1 / DL1 / V288), this protein is UPF0473 protein SGO_2040.